Here is a 316-residue protein sequence, read N- to C-terminus: MSFASETKKELTNLEMKECCEKAELSALLRMNGSLSFSNRRLSIDIQTENAAIARRIYTLLKKGYDVTVELLVRKKMRLKKNNVYIVRLVEKSREILADLHIVRDDFSFIRNISQELIEKKCCKRSYLRGAFLAGGSVNNPETSSYHLEIFSLYKEHNDAICELMNGFDLNSKTLERRKGYITYLKEAEKITEFLNIIGAHNALLRFEDIRIVRDMRNSVNRLVNCETANLNKTIGAALRQIENIRYIDETVGLDILPDKLREIAQLRRDYQDVTLKELGEMVSGGKISKSGINHRLRKIDEIAEKLRAGETVAKK.

The H-T-H motif DNA-binding region spans 275–309 (TLKELGEMVSGGKISKSGINHRLRKIDEIAEKLRA).

It belongs to the WhiA family.

Its function is as follows. Involved in cell division and chromosome segregation. This chain is Probable cell division protein WhiA, found in Bacillus cereus (strain G9842).